Here is a 371-residue protein sequence, read N- to C-terminus: Putative glutamate--cysteine ligase 2 (371 aa).

This sequence belongs to the glutamate--cysteine ligase type 2 family. YbdK subfamily.

It carries out the reaction L-cysteine + L-glutamate + ATP = gamma-L-glutamyl-L-cysteine + ADP + phosphate + H(+). In terms of biological role, ATP-dependent carboxylate-amine ligase which exhibits weak glutamate--cysteine ligase activity. The protein is Putative glutamate--cysteine ligase 2 of Cupriavidus pinatubonensis (strain JMP 134 / LMG 1197) (Cupriavidus necator (strain JMP 134)).